The following is a 384-amino-acid chain: Putative spore germination protein YfkR (384 aa).

Residues Met-1–Gly-20 form the signal peptide. Cys-21 carries the N-palmitoyl cysteine lipid modification. Cys-21 carries S-diacylglycerol cysteine lipidation.

Belongs to the GerABKC lipoprotein family.

The protein localises to the cell membrane. May be involved in spore germination. The chain is Putative spore germination protein YfkR (yfkR) from Bacillus subtilis (strain 168).